We begin with the raw amino-acid sequence, 180 residues long: Protein SPMIP9 (180 aa).

In terms of assembly, microtubule inner protein component of sperm flagellar doublet microtubules.

Its subcellular location is the nucleus. It is found in the cytoplasm. The protein resides in the cytoskeleton. The protein localises to the flagellum axoneme. Its function is as follows. Microtubule inner protein (MIP) part of the dynein-decorated doublet microtubules (DMTs) in flagella axoneme. This chain is Protein SPMIP9 (SPMIP9), found in Bos taurus (Bovine).